Here is an 808-residue protein sequence, read N- to C-terminus: Leucine-rich repeat-containing protein 41 (808 aa).

Residues 45-54 (ALFELCGRAV) are interaction with Elongin BC complex. Phosphoserine occurs at positions 155, 276, and 326. Disordered regions lie at residues 269–289 (ASRG…SRRP) and 304–404 (TRRK…GSGA). Thr-327 carries the post-translational modification Phosphothreonine. Low complexity predominate over residues 357 to 379 (PSSAPTAASSSTSSKRAPASSVS). Ser-369 bears the Phosphoserine mark. Over residues 383 to 397 (PLKRFKRATGKKGPR) the composition is skewed to basic residues. LRR repeat units lie at residues 483–503 (WVSL…IFRL), 514–526 (AGCR…LSDL), 527–551 (FSPL…VLSI), 609–631 (SGSL…FGLV), 632–655 (LQTL…LADC), 697–724 (NSTL…VFSE), and 727–748 (SSSL…LLEF).

Part of an E3 ubiquitin-protein ligase complex with Elongin BC (ELOB and ELOC), RBX1 and CUL5. Component of a probable ECS(LRRC41) complex which contains CUL5, RNF7/RBX2, Elongin BC and LRRC41. Interacts with CUL5, RNF7, ELOB and ELOC.

It participates in protein modification; protein ubiquitination. Probable substrate recognition component of an ECS (Elongin BC-CUL2/5-SOCS-box protein) E3 ubiquitin ligase complex which mediates the ubiquitination and subsequent proteasomal degradation of target proteins. The sequence is that of Leucine-rich repeat-containing protein 41 (Lrrc41) from Rattus norvegicus (Rat).